A 338-amino-acid polypeptide reads, in one-letter code: DNA-directed RNA polymerase subunit alpha (338 aa).

The alpha N-terminal domain (alpha-NTD) stretch occupies residues 1 to 234 (MIERNWNELI…DQLQIFITFE (234 aa)). Residues 250 to 338 (FNPALLKKVD…DLAKKFEDQI (89 aa)) form an alpha C-terminal domain (alpha-CTD) region.

This sequence belongs to the RNA polymerase alpha chain family. In terms of assembly, homodimer. The RNAP catalytic core consists of 2 alpha, 1 beta, 1 beta' and 1 omega subunit. When a sigma factor is associated with the core the holoenzyme is formed, which can initiate transcription.

It catalyses the reaction RNA(n) + a ribonucleoside 5'-triphosphate = RNA(n+1) + diphosphate. Its function is as follows. DNA-dependent RNA polymerase catalyzes the transcription of DNA into RNA using the four ribonucleoside triphosphates as substrates. The polypeptide is DNA-directed RNA polymerase subunit alpha (Caulobacter vibrioides (strain ATCC 19089 / CIP 103742 / CB 15) (Caulobacter crescentus)).